The sequence spans 752 residues: ATP-dependent RNA helicase DRS1 (752 aa).

Disordered stretches follow at residues 1-61 and 119-223; these read MVVG…NLDE and GLVK…TEGD. The segment covering 19-34 has biased composition (acidic residues); sequence DSEDDVPILDSSDDEK. Over residues 40–51 the composition is skewed to basic residues; that stretch reads TTKKRKGKNNKK. Residues 124-142 show a composition bias toward basic and acidic residues; sequence AHIDSKQEEETEKEKVEKE. 2 stretches are compositionally biased toward acidic residues: residues 167–191 and 200–209; these read NQSE…QEEM and DEIDEEDDSE. At Ser-208 the chain carries Phosphoserine. The Q motif motif lies at 231–259; sequence ENFNSLSLSRPVLKGLASLGYVKPSPIQS. One can recognise a Helicase ATP-binding domain in the interval 262 to 437; the sequence is IPIALLGKDI…SLSLKKPVRI (176 aa). An ATP-binding site is contributed by 275-282; sequence AVTGSGKT. The DEAD box signature appears at 385–388; it reads DEAD. Positions 448–639 constitute a Helicase C-terminal domain; the sequence is KLTQEFVRIR…SMNDTIEDIL (192 aa). Residues 621–667 are a coiled coil; sequence IEETNKLVESMNDTIEDILVEEKEEKEILRAEMQLRKGENMLKHKKE. Positions 673-752 are disordered; that stretch reads RRTWFQSESD…NKKKGFKSRR (80 aa). Basic residues predominate over residues 694–705; that stretch reads RNKKVTNSKKRK. The segment covering 722–734 has biased composition (basic and acidic residues); it reads TKTDRIADQERTF. The span at 735-752 shows a compositional bias: basic residues; that stretch reads KKQKSTNSNKKKGFKSRR.

It belongs to the DEAD box helicase family. DDX27/DRS1 subfamily. As to quaternary structure, interacts with RRP1 and associates with pre-ribosomal particles.

The protein localises to the nucleus. It is found in the nucleolus. It catalyses the reaction ATP + H2O = ADP + phosphate + H(+). ATP-binding RNA helicase involved in ribosome assembly. The sequence is that of ATP-dependent RNA helicase DRS1 (DRS1) from Saccharomyces cerevisiae (strain ATCC 204508 / S288c) (Baker's yeast).